A 151-amino-acid polypeptide reads, in one-letter code: Ribosome maturation factor RimP (151 aa).

The protein belongs to the RimP family.

The protein localises to the cytoplasm. Functionally, required for maturation of 30S ribosomal subunits. The protein is Ribosome maturation factor RimP of Shewanella baltica (strain OS223).